The sequence spans 396 residues: 1-deoxy-D-xylulose 5-phosphate reductoisomerase (396 aa).

6 residues coordinate NADPH: threonine 14, glycine 15, serine 16, isoleucine 17, glycine 40, and asparagine 128. Lysine 129 provides a ligand contact to 1-deoxy-D-xylulose 5-phosphate. Glutamate 130 provides a ligand contact to NADPH. Aspartate 154 is a Mn(2+) binding site. 1-deoxy-D-xylulose 5-phosphate is bound by residues serine 155, glutamate 156, serine 180, and histidine 203. Glutamate 156 contacts Mn(2+). Glycine 209 provides a ligand contact to NADPH. 1-deoxy-D-xylulose 5-phosphate is bound by residues serine 216, asparagine 221, lysine 222, and glutamate 225. Position 225 (glutamate 225) interacts with Mn(2+).

Belongs to the DXR family. Mg(2+) is required as a cofactor. Requires Mn(2+) as cofactor.

It carries out the reaction 2-C-methyl-D-erythritol 4-phosphate + NADP(+) = 1-deoxy-D-xylulose 5-phosphate + NADPH + H(+). The protein operates within isoprenoid biosynthesis; isopentenyl diphosphate biosynthesis via DXP pathway; isopentenyl diphosphate from 1-deoxy-D-xylulose 5-phosphate: step 1/6. Catalyzes the NADPH-dependent rearrangement and reduction of 1-deoxy-D-xylulose-5-phosphate (DXP) to 2-C-methyl-D-erythritol 4-phosphate (MEP). This chain is 1-deoxy-D-xylulose 5-phosphate reductoisomerase, found in Xylella fastidiosa (strain 9a5c).